Here is a 546-residue protein sequence, read N- to C-terminus: Smad protein daf-8 (546 aa).

One can recognise an MH1 domain in the interval 16 to 137 (AMAQKVLEET…YRWVELPTCQ (122 aa)). Disordered stretches follow at residues 234-268 (LQQS…FIPN) and 292-317 (ENFS…PIEP). Residues 292-302 (ENFSSENNGNR) show a composition bias toward polar residues. The MH2 domain maps to 349–546 (WLKLIYYEEG…APPRICSSRT (198 aa)).

The protein belongs to the dwarfin/SMAD family. In terms of assembly, homodimer. Interacts with R-SMAD daf-14 and co-SMAD daf-3. Interacts with orphan nuclear receptor nhr-69. As to expression, expressed in the excretory cell and gonadal distal tip cells (DTCs).

Its subcellular location is the cytoplasm. The protein localises to the nucleus. In terms of biological role, probably a receptor-regulated SMAD (R-SMAD) that is an intracellular signal transducer and transcriptional modulator activated by TGF-beta-like daf-7 signaling. Plays a role in TGF-beta-like daf-7 signaling in regulating entry into a developmentally arrested larval state known as dauer, in response to harsh environmental conditions; partially redundant with R-SMAD daf-14. Plays a role in inhibiting mitosis and promoting a switch to meiosis in the germ line, perhaps by down-regulating lag-2 transcription in the gonadal distal tip cells (DTCs). In cooperation with orphan nuclear receptor nhr-69 modulates the Insulin/IGF-1-like signaling (IIS) pathway, perhaps by regulating expression of the potassium channel exp-2, which in turn modulates the secretion of the insulin-like peptide daf-28. The sequence is that of Smad protein daf-8 from Caenorhabditis elegans.